The primary structure comprises 225 residues: Cytidylate kinase (225 aa).

12–20 (GPSGAGKGT) contributes to the ATP binding site.

The protein belongs to the cytidylate kinase family. Type 1 subfamily.

It localises to the cytoplasm. It carries out the reaction CMP + ATP = CDP + ADP. It catalyses the reaction dCMP + ATP = dCDP + ADP. The protein is Cytidylate kinase of Vibrio cholerae serotype O1 (strain ATCC 39315 / El Tor Inaba N16961).